Here is a 75-residue protein sequence, read N- to C-terminus: Pi-hexatoxin-Hi1b (75 aa).

6 disulfide bridges follow: Cys-3/Cys-18, Cys-10/Cys-23, Cys-17/Cys-33, Cys-40/Cys-55, Cys-47/Cys-60, and Cys-54/Cys-71. Domain repeat units follow at residues 3 to 33 (CIRK…FEVC) and 40 to 71 (CLVK…SSVC). Residues 3 to 71 (CIRKWLSCVD…KRSGNKSSVC (69 aa)) form a 2 X approximate repeats with cysteine pattern C-C-CC-C-C region.

It belongs to the psalmotoxin-1 family. Double-knot toxin subfamily. Expressed by the venom gland.

Its subcellular location is the secreted. Its function is as follows. This toxin potently and selectively inhibits ASIC1a, an isoform of the gene ASIC1. It incompletely inhibits ASIC1a activation in a pH-independent and slowly reversible manner. This toxin acts by binding to and stabilizing the closed state of the channel, thereby impeding the transition into a conducting state. This toxin may bind to the acidic pocket of ASIC1a, since mutation of a key residue of this pocket (Arg-350) abolishes the ability of the toxin to inhibit ASIC1a. In vivo, this toxin protects the brain from neuronal injury when administered up to 8 hours after stroke onset. The chain is Pi-hexatoxin-Hi1b from Hadronyche infensa (Fraser island funnel-web spider).